A 549-amino-acid polypeptide reads, in one-letter code: MEADFVIIGSGSAGSAMAYRLSEDGRYSVIVIEYGVPDVGPLIQMPAALSFPMNMETYDWGFSSEPEPHIRGRSLVTPRGKVLGGSSSINGMVYVRGHACDFDHWSQSGARGWAYADVLPYFKRMENSQGGQEGWRGTNGPLYVQRGKRDNPLFHAFVEAGHQAGFEVTDDYNGEKQEGFGPMEQTIHNGRRWSAANAYLKPALKRPNVKLVKGFARKIVLEGKRAVGVEIEAGRTFSTIRARREVIIAASSINSPKLLMLSGIGPAAHLKEHGIDLVADRPGVGQNLQDHLEVYIQQECTQPITLYSKLNLFSKARIGVEWLLFKTGDGATNHFESAAFVRSKAGVEYPDIQYHFLPVAIRYDGKAAAQSHGFQAHVGPMRSKSRGSVTLRSANPREKPVIKFNYMSHEDDWADFRHCVRLTREIFGQAAFDPYRGAEIQPGAHVQTDDEIDNFIREHVESAFHPCGTCKMGAVDDPMAVVDPECRVIGVEGLRVADSSIFPRITNGNLNGPSIMVGEKASGHILGRTPLARSNQEPWINPRWQVSDR.

An FAD-binding site is contributed by Asp-4 to Glu-33. His-465 (proton acceptor) is an active-site residue.

Belongs to the GMC oxidoreductase family. FAD serves as cofactor.

It carries out the reaction choline + A = betaine aldehyde + AH2. The catalysed reaction is betaine aldehyde + NAD(+) + H2O = glycine betaine + NADH + 2 H(+). Its pathway is amine and polyamine biosynthesis; betaine biosynthesis via choline pathway; betaine aldehyde from choline (cytochrome c reductase route): step 1/1. Functionally, involved in the biosynthesis of the osmoprotectant glycine betaine. Catalyzes the oxidation of choline to betaine aldehyde and betaine aldehyde to glycine betaine at the same rate. The chain is Oxygen-dependent choline dehydrogenase from Brucella melitensis biotype 1 (strain ATCC 23456 / CCUG 17765 / NCTC 10094 / 16M).